A 496-amino-acid polypeptide reads, in one-letter code: Glycerol kinase (496 aa).

Thr-12 provides a ligand contact to ADP. ATP-binding residues include Thr-12, Thr-13, and Ser-14. Thr-12 provides a ligand contact to sn-glycerol 3-phosphate. Position 16 (Arg-16) interacts with ADP. Residues Arg-82, Glu-83, and Tyr-134 each coordinate sn-glycerol 3-phosphate. Glycerol contacts are provided by Arg-82, Glu-83, and Tyr-134. Position 230 is a phosphohistidine; by HPr (His-230). Position 244 (Asp-244) interacts with sn-glycerol 3-phosphate. Residues Asp-244 and Gln-245 each contribute to the glycerol site. ADP is bound by residues Thr-266 and Gly-309. ATP-binding residues include Thr-266, Gly-309, Gln-313, and Gly-410. Residues Gly-410 and Asn-414 each contribute to the ADP site.

This sequence belongs to the FGGY kinase family. In terms of assembly, homotetramer and homodimer (in equilibrium). The phosphoenolpyruvate-dependent sugar phosphotransferase system (PTS), including enzyme I, and histidine-containing protein (HPr) are required for the phosphorylation, which leads to the activation of the enzyme.

It catalyses the reaction glycerol + ATP = sn-glycerol 3-phosphate + ADP + H(+). Its pathway is polyol metabolism; glycerol degradation via glycerol kinase pathway; sn-glycerol 3-phosphate from glycerol: step 1/1. Activated by phosphorylation and inhibited by fructose 1,6-bisphosphate (FBP). Functionally, key enzyme in the regulation of glycerol uptake and metabolism. Catalyzes the phosphorylation of glycerol to yield sn-glycerol 3-phosphate. The sequence is that of Glycerol kinase from Bacillus subtilis (strain 168).